Here is a 562-residue protein sequence, read N- to C-terminus: Catalase T (562 aa).

Residues His-64 and Asn-137 contribute to the active site. Tyr-351 serves as a coordination point for heme.

It belongs to the catalase family. Homotetramer. Heme serves as cofactor.

Its subcellular location is the cytoplasm. It catalyses the reaction 2 H2O2 = O2 + 2 H2O. In terms of biological role, occurs in almost all aerobically respiring organisms and serves to protect cells from the toxic effects of hydrogen peroxide. This is Catalase T (CTT1) from Saccharomyces cerevisiae (strain ATCC 204508 / S288c) (Baker's yeast).